A 433-amino-acid chain; its full sequence is Type I acyl-CoA thioesterase mpaH (433 aa).

Residues 58 to 246 form an abhydrolase domain region; sequence HGVGLPKELY…VKARFDAAAD (189 aa). Val60 contacts substrate. Ser139 serves as the catalytic Nucleophile. Phe140 contributes to the substrate binding site. Residues Asp163 and His365 contribute to the active site.

The protein belongs to the AB hydrolase superfamily. MpaH hydrolase family. As to quaternary structure, homodimer.

It localises to the peroxisome matrix. It catalyses the reaction mycophenolyl-CoA + H2O = mycophenolate + CoA + H(+). It functions in the pathway secondary metabolite biosynthesis; terpenoid biosynthesis. Its function is as follows. Type I acyl-CoA thioesterase; part of the gene cluster that mediates the biosynthesis of mycophenolic acid (MPA), the first isolated antibiotic natural product in the world obtained from a culture of Penicillium brevicompactum in 1893. MpaH acts as a peroxisomal acyl-CoA hydrolase that converts MPA-CoA into the final product MPA. The first step of the pathway is the synthesis of 5-methylorsellinic acid (5MOA) by the cytosolic polyketide synthase mpaC. 5MOA is then converted to the phthalide compound 5,7-dihydroxy-4,6-dimethylphthalide (DHMP) by the endoplasmic reticulum-bound cytochrome P450 monooxygenase mpaDE. MpaDE first catalyzes hydroxylation of 5-MOA to 4,6-dihydroxy-2-(hydroxymethyl)-3-methylbenzoic acid (DHMB). MpaDE then acts as a lactone synthase that catalyzes the ring closure to convert DHMB into DHMP. The next step is the prenylation of DHMP by the Golgi apparatus-associated prenyltransferase mpaA to yield farnesyl-DHMP (FDHMP). The ER-bound oxygenase mpaB then mediates the oxidative cleavage the C19-C20 double bond in FDHMP to yield FDHMP-3C via a mycophenolic aldehyde intermediate. The O-methyltransferase mpaG catalyzes the methylation of FDHMP-3C to yield MFDHMP-3C. After the cytosolic methylation of FDHMP-3C, MFDHMP-3C enters into peroxisomes probably via free diffusion due to its low molecular weight. Upon a peroxisomal CoA ligation reaction, catalyzed by a beta-oxidation component enzyme acyl-CoA ligase ACL891, MFDHMP-3C-CoA would then be restricted to peroxisomes for the following beta-oxidation pathway steps. The peroxisomal beta-oxidation machinery than converts MFDHMP-3C-CoA into MPA_CoA, via a beta-oxidation chain-shortening process. Finally mpaH acts as a peroxisomal acyl-CoA hydrolase with high substrate specificity toward MPA-CoA to release the final product MPA. The sequence is that of Type I acyl-CoA thioesterase mpaH from Penicillium roqueforti (strain FM164).